The primary structure comprises 432 residues: Adenylosuccinate synthetase (432 aa).

GTP-binding positions include 13-19 (GDEGKGK) and 41-43 (GHT). Catalysis depends on Asp14, which acts as the Proton acceptor. Mg(2+)-binding residues include Asp14 and Gly41. IMP contacts are provided by residues 14 to 17 (DEGK), 39 to 42 (NAGH), Thr131, Arg145, Gln226, Thr241, and Arg305. His42 functions as the Proton donor in the catalytic mechanism. 301–307 (SVTGRAR) is a binding site for substrate. GTP contacts are provided by residues Arg307, 333 to 335 (KLD), and 416 to 418 (STG).

The protein belongs to the adenylosuccinate synthetase family. Homodimer. Mg(2+) is required as a cofactor.

Its subcellular location is the cytoplasm. It carries out the reaction IMP + L-aspartate + GTP = N(6)-(1,2-dicarboxyethyl)-AMP + GDP + phosphate + 2 H(+). The protein operates within purine metabolism; AMP biosynthesis via de novo pathway; AMP from IMP: step 1/2. Its function is as follows. Plays an important role in the de novo pathway of purine nucleotide biosynthesis. Catalyzes the first committed step in the biosynthesis of AMP from IMP. This chain is Adenylosuccinate synthetase, found in Neisseria meningitidis serogroup C (strain 053442).